The sequence spans 237 residues: 7-cyano-7-deazaguanine synthase (237 aa).

ATP is bound at residue 9–19 (YSGGLDSTTCL). Cys189, Cys199, Cys202, and Cys205 together coordinate Zn(2+).

This sequence belongs to the QueC family. Zn(2+) serves as cofactor.

It carries out the reaction 7-carboxy-7-deazaguanine + NH4(+) + ATP = 7-cyano-7-deazaguanine + ADP + phosphate + H2O + H(+). Its pathway is purine metabolism; 7-cyano-7-deazaguanine biosynthesis. Functionally, catalyzes the ATP-dependent conversion of 7-carboxy-7-deazaguanine (CDG) to 7-cyano-7-deazaguanine (preQ(0)). The sequence is that of 7-cyano-7-deazaguanine synthase from Geobacter metallireducens (strain ATCC 53774 / DSM 7210 / GS-15).